Reading from the N-terminus, the 338-residue chain is Envelope glycoprotein K (338 aa).

The first 30 residues, 1–30 (MLAVRSLQHLSTVVLITAYGLVLVWYTVFG), serve as a signal peptide directing secretion. Residues 31–121 (ASPLHRCIYA…VNCLETLWYT (91 aa)) lie on the Extracellular side of the membrane. The interval 31–121 (ASPLHRCIYA…VNCLETLWYT (91 aa)) is involved in fusion. Asparagine 48 and asparagine 58 each carry an N-linked (GlcNAc...) asparagine; by host glycan. A helical membrane pass occupies residues 122-140 (RVRLVVVGWFLYLAFVALH). Residues 141-212 (QRRCMFGVVS…DPVTFLYHRP (72 aa)) lie on the Cytoplasmic side of the membrane. The helical transmembrane segment at 213-233 (AIGVIVGCELIVRFVAVGLIV) threads the bilayer. Residues 234 to 243 (GTAFISRGAC) are Extracellular-facing. Residues 244–264 (AITYPLFLTITTWCFVSTIGL) form a helical membrane-spanning segment. Residues 265–301 (TELYCILRRGPAPKNADKAAAPGRSKGLSGVCGRCCS) lie on the Cytoplasmic side of the membrane. The interaction with UL20 stretch occupies residues 265 to 301 (TELYCILRRGPAPKNADKAAAPGRSKGLSGVCGRCCS). Residues 302-322 (IILSGIAMRLCYIAVVAGVVL) form a helical membrane-spanning segment. Residues 323-338 (VALHYEQEIQRRLFDV) lie on the Extracellular side of the membrane.

The protein belongs to the alphaherpesvirinae glycoprotein K family. In terms of assembly, interacts (via UL20 interaction region) with protein UL20 (via N-terminus); this interaction probably plays a role in the coordinate transport of protein UL20 and gK to the trans-Golgi network (TGN), and is required for the cell surface expression of gK. In terms of processing, N-glycosylated.

The protein resides in the host cell membrane. It is found in the host endosome membrane. It localises to the host Golgi apparatus membrane. In terms of biological role, glycoprotein that probably modulates membrane fusion events during secondary envelopment of cytoplasmic capsids that bud into specific trans-Golgi network (TGN)-derived membranes. Also plays a role, together with gB, in virus-induced cell-to-cell fusion (syncytia formation). Seems to block fusion of virions with infected-cell membranes. The protein is Envelope glycoprotein K (gK) of Homo sapiens (Human).